A 592-amino-acid polypeptide reads, in one-letter code: MNVYESLQTVLLFVVLLAMVKPLGTFMARVFQGERTILSPVLAPAESLLYGVCGVNSEEEMDWKRYARAMVLFNLVIFATLFAMLMLQHLLPLNPQKFPAFSWQLALNTAVSFTTNTNWQAYAGEQAASYFTQMVGLTVHNFVSAATGIAVAIAVIRGFARRTTSALGNFWVDLTRATLYILVPISLIAALVLVSQGVIQNFSAYQAVSLVQPVTYDTPKRDGTGSPVKDPTGNPVTERVTAKEVTIPMGPVASQEAIKELGTNGGGFFNANSAHPFENPTPLSNMLEILLILLIPFSLTYTFGAMVGNTRQGWTLLGVMLLILLASFAVLQGVESGGNPLVTKLGVHGANMEGKDTRFGLAGSSLFTVATTGTSCGAVNTMHDSLTPIGGMIPMSLMLLGELVPGGVGSGLYTMLAFAVIAVFVSGLMIGRTPEYLGKKIEVREMWMSVVTVLAAGVMVLILSGIAMISPSAVAAMANPGAHGLSEVLYAFASMANNNGSAFAGLSANTTFYNILGALAMIVGRFAPAVAVLAMAGSLAEKKYVPPSLGTLPTDKVPFALWLTLVILIVGALTFFPALSLGPIVEHLTMTM.

Helical transmembrane passes span 7–27, 71–91, 136–156, 179–199, 287–307, 314–334, 411–431, 449–469, 473–493, 515–535, and 559–579; these read LQTVLLFVVLLAMVKPLGTFM, VLFNLVIFATLFAMLMLQHLL, GLTVHNFVSAATGIAVAIAVI, LYILVPISLIAALVLVSQGVI, LEILLILLIPFSLTYTFGAMV, WTLLGVMLLILLASFAVLQGV, GLYTMLAFAVIAVFVSGLMIG, SVVTVLAAGVMVLILSGIAMI, AVAAMANPGAHGLSEVLYAFA, ILGALAMIVGRFAPAVAVLAM, and FALWLTLVILIVGALTFFPAL.

This sequence belongs to the KdpA family. The system is composed of three essential subunits: KdpA, KdpB and KdpC.

Its subcellular location is the cell inner membrane. In terms of biological role, part of the high-affinity ATP-driven potassium transport (or Kdp) system, which catalyzes the hydrolysis of ATP coupled with the electrogenic transport of potassium into the cytoplasm. This subunit binds the periplasmic potassium ions and delivers the ions to the membrane domain of KdpB through an intramembrane tunnel. The chain is Potassium-transporting ATPase potassium-binding subunit from Geobacter sulfurreducens (strain ATCC 51573 / DSM 12127 / PCA).